Reading from the N-terminus, the 148-residue chain is Large ribosomal subunit protein bL9 (148 aa).

The protein belongs to the bacterial ribosomal protein bL9 family.

Binds to the 23S rRNA. In Chloroflexus aurantiacus (strain ATCC 29366 / DSM 635 / J-10-fl), this protein is Large ribosomal subunit protein bL9.